We begin with the raw amino-acid sequence, 356 residues long: Peptide chain release factor 1 (356 aa).

Q234 is modified (N5-methylglutamine).

It belongs to the prokaryotic/mitochondrial release factor family. Post-translationally, methylated by PrmC. Methylation increases the termination efficiency of RF1.

Its subcellular location is the cytoplasm. Peptide chain release factor 1 directs the termination of translation in response to the peptide chain termination codons UAG and UAA. This chain is Peptide chain release factor 1, found in Exiguobacterium sp. (strain ATCC BAA-1283 / AT1b).